The following is a 318-amino-acid chain: MAFHHIPVLLQETMEALAVRPGGTYIDCTVGGGGHAAEILRRSSPDGRLIGLDQDENALRAAGDRLAPFGDRVTLVRTNFEHVADVADRLGLGAADGVLMDIGVSSHQFDEGERGFSYHHDAPLDMRMDRTRPLTAAVLVNEWEEEEIARVIREYGEERWASRIAQFIVRARRQRPIETTGQLVEIIKAAIPASARREGGHPARRTFQAIRIAVNDELGALERGLEGALRVLRPGGRLAVITFHSLEDRIVKQTFARWAKPCTCPPDLPVCVCGKAPLAEPVTRKPVRASGAEVKANPRSRSATLRAVVKLQAGEEAK.

S-adenosyl-L-methionine-binding positions include 33-35, Asp-53, Phe-80, Asp-101, and Gln-108; that span reads GGH.

It belongs to the methyltransferase superfamily. RsmH family.

The protein resides in the cytoplasm. It catalyses the reaction cytidine(1402) in 16S rRNA + S-adenosyl-L-methionine = N(4)-methylcytidine(1402) in 16S rRNA + S-adenosyl-L-homocysteine + H(+). In terms of biological role, specifically methylates the N4 position of cytidine in position 1402 (C1402) of 16S rRNA. This is Ribosomal RNA small subunit methyltransferase H from Symbiobacterium thermophilum (strain DSM 24528 / JCM 14929 / IAM 14863 / T).